The sequence spans 242 residues: Protein LST7 (242 aa).

The region spanning S48–V212 is the uDENN FLCN/SMCR8-type domain.

In terms of biological role, required for the nitrogen-regulated transport of amino acid permeases GAP1 and PUT4 from the Golgi to the cell surface. The protein is Protein LST7 (LST7) of Saccharomyces cerevisiae (strain ATCC 204508 / S288c) (Baker's yeast).